The chain runs to 370 residues: Spermidine/putrescine import ATP-binding protein PotA (370 aa).

The 231-residue stretch at Ile-11–Ile-241 folds into the ABC transporter domain. Gly-43 to Thr-50 serves as a coordination point for ATP.

This sequence belongs to the ABC transporter superfamily. Spermidine/putrescine importer (TC 3.A.1.11.1) family. In terms of assembly, the complex is composed of two ATP-binding proteins (PotA), two transmembrane proteins (PotB and PotC) and a solute-binding protein (PotD).

It localises to the cell inner membrane. It catalyses the reaction ATP + H2O + polyamine-[polyamine-binding protein]Side 1 = ADP + phosphate + polyamineSide 2 + [polyamine-binding protein]Side 1.. Part of the ABC transporter complex PotABCD involved in spermidine/putrescine import. Responsible for energy coupling to the transport system. The protein is Spermidine/putrescine import ATP-binding protein PotA of Pasteurella multocida (strain Pm70).